We begin with the raw amino-acid sequence, 1264 residues long: uncharacterized protein (1264 aa).

Residues 1–18 (MMRKYLILLILLPALAVG) form the signal peptide. Residues 1215–1235 (SYTVLGVVVITILTMSIILCL) traverse the membrane as a helical segment.

It is found in the host membrane. This is an uncharacterized protein from Ostreid herpesvirus 1 (isolate France) (OsHV-1).